The following is a 189-amino-acid chain: Guanylate kinase (189 aa).

A Guanylate kinase-like domain is found at 8-186 (GKLTVITGPS…AVIELESLMG (179 aa)). Residue 15–22 (GPSGVGKG) participates in ATP binding.

The protein belongs to the guanylate kinase family.

It is found in the cytoplasm. It carries out the reaction GMP + ATP = GDP + ADP. In terms of biological role, essential for recycling GMP and indirectly, cGMP. This chain is Guanylate kinase, found in Prochlorococcus marinus (strain MIT 9313).